Consider the following 284-residue polypeptide: Tropomyosin (284 aa).

Positions 1–284 form a coiled coil; sequence MDSIKKKMMA…DTTFAELTSF (284 aa). The disordered stretch occupies residues 97 to 140; sequence EDFEQSSGRLTETSTKLDDASKAAEESERNRKTLETRSISDDER. Positions 101 to 110 are enriched in polar residues; sequence QSSGRLTETS. A compositionally biased stretch (basic and acidic residues) spans 111 to 140; it reads TKLDDASKAAEESERNRKTLETRSISDDER.

This sequence belongs to the tropomyosin family. As to quaternary structure, homodimer.

Its function is as follows. Tropomyosin, in association with the troponin complex, plays a central role in the calcium dependent regulation of muscle contraction. In Echinococcus multilocularis (Fox tapeworm), this protein is Tropomyosin.